Here is a 470-residue protein sequence, read N- to C-terminus: Glucose-1-phosphate adenylyltransferase large subunit 1 (470 aa).

It belongs to the bacterial/plant glucose-1-phosphate adenylyltransferase family. As to quaternary structure, heterotetramer. Prominently expressed in the leaves and a weaker expression is seen in the tubers.

The protein localises to the plastid. It is found in the chloroplast. The protein resides in the amyloplast. The catalysed reaction is alpha-D-glucose 1-phosphate + ATP + H(+) = ADP-alpha-D-glucose + diphosphate. Its pathway is glycan biosynthesis; starch biosynthesis. Activated by 3'phosphoglycerate, inhibited by orthophosphate. Allosteric regulation. Its function is as follows. This protein plays a role in synthesis of starch. It catalyzes the synthesis of the activated glycosyl donor, ADP-glucose from Glc-1-P and ATP. This is Glucose-1-phosphate adenylyltransferase large subunit 1 (AGPS1) from Solanum tuberosum (Potato).